A 399-amino-acid polypeptide reads, in one-letter code: Serpin-Z4 (399 aa).

The segment at 36-56 is signal for targeting protein Z4 into the ER lumen; the sequence is GNVAFSPLSLHVALSLITAGA. Positions 343-367 are RCL; that stretch reads GTEAGAATVAMGVAMSMPLKVDLVD.

The protein belongs to the serpin family. Highly expressed in embryo and endosperm. Is accumulated and stored in the endosperm, where it exists in a free and a bound form. Expressed in roots, coleoptiles, shoots and leaves.

Functionally, a major component of the endosperm albumin, this protein acts as a storage protein during grain filling, contributing a substantial part of the grain's lysine. May have an inhibitory function during filling or germination. Inhibits cathepsin G in vitro. In Hordeum vulgare (Barley), this protein is Serpin-Z4 (PAZ1).